The sequence spans 1848 residues: Chitin synthase E (1848 aa).

Residues 1–17 are compositionally biased toward low complexity; the sequence is MAAPSPAGGAPSHAQSS. The tract at residues 1–22 is disordered; sequence MAAPSPAGGAPSHAQSSLPSLP. Residues 1–779 form the Myosin motor domain; it reads MAAPSPAGGA…CWADLAKVGE (779 aa). ATP is bound at residue 102 to 109; that stretch reads GESGSGKT. Residues 593–621 form a disordered region; the sequence is SSKPLRMPSMARRKTSPSSRLAFDAGDAD. The tract at residues 659-683 is actin-binding; it reads LDIVNKCLSSTNLNPYFIFCLKPND. Helical transmembrane passes span 889 to 909 and 928 to 948; these read WIAL…KLFG and LIIW…PGLV. A Cytochrome b5 heme-binding domain is found at 952-1040; it reads QHVYSAAELS…LLDYRPTNIS (89 aa). N-linked (GlcNAc...) asparagine glycans are attached at residues asparagine 1038 and asparagine 1063. The helical transmembrane segment at 1200–1220 threads the bilayer; it reads FILAISVLICSIIVFKFLAAL. 3 N-linked (GlcNAc...) asparagine glycosylation sites follow: asparagine 1423, asparagine 1457, and asparagine 1563. 3 helical membrane passes run 1595–1615, 1621–1641, and 1648–1668; these read LSTV…YWLV, IPYT…LIFI, and MVGW…ALPL. Asparagine 1786 carries N-linked (GlcNAc...) asparagine glycosylation. The 56-residue stretch at 1790–1845 folds into the DEK-C domain; sequence LPSDDAILAEIREILRTADLMSVTKKSIKLELERRFGVNLDLKRPYINSATEAVLA.

This sequence in the N-terminal section; belongs to the TRAFAC class myosin-kinesin ATPase superfamily. Myosin family. The protein in the C-terminal section; belongs to the chitin synthase family. Class V subfamily.

Its subcellular location is the cell membrane. The protein resides in the cell septum. The protein localises to the cell tip. The enzyme catalyses [(1-&gt;4)-N-acetyl-beta-D-glucosaminyl](n) + UDP-N-acetyl-alpha-D-glucosamine = [(1-&gt;4)-N-acetyl-beta-D-glucosaminyl](n+1) + UDP + H(+). Its function is as follows. Polymerizes chitin, a structural polymer of the cell wall and septum, by transferring the sugar moiety of UDP-GlcNAc to the non-reducing end of the growing chitin polymer. Important for hyphal growth and conidiophore development but not pathogenicity. The protein is Chitin synthase E of Aspergillus fumigatus (strain ATCC MYA-4609 / CBS 101355 / FGSC A1100 / Af293) (Neosartorya fumigata).